The primary structure comprises 326 residues: Beta-ketoacyl-[acyl-carrier-protein] synthase III (326 aa).

Active-site residues include Cys-112 and His-251. The segment at 252 to 256 (QANSR) is ACP-binding. Asn-281 is a catalytic residue.

The protein belongs to the thiolase-like superfamily. FabH family. In terms of assembly, homodimer.

It localises to the cytoplasm. The enzyme catalyses malonyl-[ACP] + acetyl-CoA + H(+) = 3-oxobutanoyl-[ACP] + CO2 + CoA. It participates in lipid metabolism; fatty acid biosynthesis. Functionally, catalyzes the condensation reaction of fatty acid synthesis by the addition to an acyl acceptor of two carbons from malonyl-ACP. Catalyzes the first condensation reaction which initiates fatty acid synthesis and may therefore play a role in governing the total rate of fatty acid production. Possesses both acetoacetyl-ACP synthase and acetyl transacylase activities. Its substrate specificity determines the biosynthesis of branched-chain and/or straight-chain of fatty acids. The chain is Beta-ketoacyl-[acyl-carrier-protein] synthase III from Clostridium botulinum (strain Loch Maree / Type A3).